A 447-amino-acid polypeptide reads, in one-letter code: Phosphoglucosamine mutase (447 aa).

The active-site Phosphoserine intermediate is Ser-104. Mg(2+) is bound by residues Ser-104, Asp-243, Asp-245, and Asp-247. Ser-104 carries the phosphoserine modification.

Belongs to the phosphohexose mutase family. The cofactor is Mg(2+). Post-translationally, activated by phosphorylation.

It catalyses the reaction alpha-D-glucosamine 1-phosphate = D-glucosamine 6-phosphate. Its function is as follows. Catalyzes the conversion of glucosamine-6-phosphate to glucosamine-1-phosphate. The polypeptide is Phosphoglucosamine mutase (Corynebacterium efficiens (strain DSM 44549 / YS-314 / AJ 12310 / JCM 11189 / NBRC 100395)).